The following is a 527-amino-acid chain: Butyrophilin subfamily 2 member A1 (527 aa).

An N-terminal signal peptide occupies residues 1–28 (MESAAALHFSRPASLLLLLLSLCALVSA). In terms of domain architecture, Ig-like V-type spans 29–141 (QFIVVGPTDP…SYDEAILHLV (113 aa)). The Extracellular portion of the chain corresponds to 29-248 (QFIVVGPTDP…SFMPSVSPCA (220 aa)). 3 N-linked (GlcNAc...) asparagine glycosylation sites follow: asparagine 46, asparagine 114, and asparagine 120. An intrachain disulfide couples cysteine 51 to cysteine 125. The chain crosses the membrane as a helical span at residues 249-269 (VALPIIVVILMIPIAVCIYWI). Over 270–527 (NKLQKEKKIL…LHRVGTHQSL (258 aa)) the chain is Cytoplasmic. The region spanning 310-506 (VKEKLQEELR…IFICPALTGA (197 aa)) is the B30.2/SPRY domain.

It belongs to the immunoglobulin superfamily. BTN/MOG family. In terms of tissue distribution, highly expressed in brain, bone marrow, small intestine, muscle, spleen and pancreas. Moderate expression was seen in lung, liver and kidney.

The protein resides in the membrane. This chain is Butyrophilin subfamily 2 member A1 (BTN2A1), found in Homo sapiens (Human).